The sequence spans 963 residues: Exportin-T (963 aa).

An N-acetylmethionine modification is found at methionine 1. Residue lysine 635 is modified to N6-acetyllysine.

This sequence belongs to the exportin family. In terms of assembly, found in a complex with XPOT, Ran and tRNA. Probably found in a complex with nucleoporins. Interacts with Ran and tRNA in a GTP-dependent manner.

It is found in the nucleus. It localises to the cytoplasm. Mediates the nuclear export of aminoacylated tRNAs. In the nucleus binds to tRNA and to the GTPase Ran in its active GTP-bound form. Docking of this trimeric complex to the nuclear pore complex (NPC) is mediated through binding to nucleoporins. Upon transit of a nuclear export complex into the cytoplasm, disassembling of the complex and hydrolysis of Ran-GTP to Ran-GDP (induced by RANBP1 and RANGAP1, respectively) cause release of the tRNA from the export receptor. XPOT then return to the nuclear compartment and mediate another round of transport. The directionality of nuclear export is thought to be conferred by an asymmetric distribution of the GTP- and GDP-bound forms of Ran between the cytoplasm and nucleus. This is Exportin-T (Xpot) from Mus musculus (Mouse).